Consider the following 32-residue polypeptide: Photosystem II reaction center protein T (32 aa).

A helical transmembrane segment spans residues 3-23 (ALVYTFLLIGTLMVIFFAVFF).

Belongs to the PsbT family. As to quaternary structure, PSII is composed of 1 copy each of membrane proteins PsbA, PsbB, PsbC, PsbD, PsbE, PsbF, PsbH, PsbI, PsbJ, PsbK, PsbL, PsbM, PsbT, PsbX, PsbY, PsbZ, Psb30/Ycf12, at least 3 peripheral proteins of the oxygen-evolving complex and a large number of cofactors. It forms dimeric complexes.

The protein localises to the plastid. Its subcellular location is the chloroplast thylakoid membrane. In terms of biological role, found at the monomer-monomer interface of the photosystem II (PS II) dimer, plays a role in assembly and dimerization of PSII. PSII is a light-driven water plastoquinone oxidoreductase, using light energy to abstract electrons from H(2)O, generating a proton gradient subsequently used for ATP formation. This Trieres chinensis (Marine centric diatom) protein is Photosystem II reaction center protein T.